Here is a 387-residue protein sequence, read N- to C-terminus: DNA double-strand break repair protein Mre11 (387 aa).

Mn(2+)-binding residues include aspartate 9, histidine 11, aspartate 50, and asparagine 85. Histidine 86 (proton donor) is an active-site residue. The Mn(2+) site is built by histidine 150, aspartate 181, and histidine 183. Positions 365–387 are disordered; that stretch reads AVLDDDADAADDDGRPTTVEEFQ. Acidic residues predominate over residues 366 to 375; it reads VLDDDADAAD.

The protein belongs to the MRE11/RAD32 family. In terms of assembly, homodimer. Forms a heterotetramer composed of two Mre11 subunits and two Rad50 subunits. Requires Mn(2+) as cofactor.

With respect to regulation, nuclease activity is regulated by Rad50. Its function is as follows. Part of the Rad50/Mre11 complex, which is involved in the early steps of DNA double-strand break (DSB) repair. Mre11 binds to DSB ends and has both double-stranded 3'-5' exonuclease activity and single-stranded endonuclease activity. The protein is DNA double-strand break repair protein Mre11 of Halobacterium salinarum (strain ATCC 700922 / JCM 11081 / NRC-1) (Halobacterium halobium).